The following is a 259-amino-acid chain: MRKTFFRLCFELSSHPVLSSMLQAFTTSKASRWLIPSFVRVYNINGQEAEKPLHTYQSLQEVFTRTLTENCRPIDLSPKSIVSPVDGVLAEQGTLSDEANFVVKNQTYTLEEMLGGKEKAKLYREGTYLLFYLSPSHYHRIHSPVNGTIKEQWTLGNKSAPVNNLGLRYGKRPLSRNYRLLTELEAEEGRCIVAKIGALNVNSIVPTHQSEHVDKGEEIGYFAFGSSVMLFFEKGTIQLDHQPRAVEVKMGEKVGSWLR.

Catalysis depends on charge relay system; for autoendoproteolytic cleavage activity residues D86, H142, and S226. The active-site Schiff-base intermediate with substrate; via pyruvic acid; for decarboxylase activity is S226. Residue S226 is modified to Pyruvic acid (Ser); by autocatalysis.

The protein belongs to the phosphatidylserine decarboxylase family. PSD-B subfamily. Prokaryotic type I sub-subfamily. In terms of assembly, heterodimer of a large membrane-associated beta subunit and a small pyruvoyl-containing alpha subunit. Pyruvate is required as a cofactor. Post-translationally, is synthesized initially as an inactive proenzyme. Formation of the active enzyme involves a self-maturation process in which the active site pyruvoyl group is generated from an internal serine residue via an autocatalytic post-translational modification. Two non-identical subunits are generated from the proenzyme in this reaction, and the pyruvate is formed at the N-terminus of the alpha chain, which is derived from the carboxyl end of the proenzyme. The autoendoproteolytic cleavage occurs by a canonical serine protease mechanism, in which the side chain hydroxyl group of the serine supplies its oxygen atom to form the C-terminus of the beta chain, while the remainder of the serine residue undergoes an oxidative deamination to produce ammonia and the pyruvoyl prosthetic group on the alpha chain. During this reaction, the Ser that is part of the protease active site of the proenzyme becomes the pyruvoyl prosthetic group, which constitutes an essential element of the active site of the mature decarboxylase.

The protein localises to the cell membrane. It catalyses the reaction a 1,2-diacyl-sn-glycero-3-phospho-L-serine + H(+) = a 1,2-diacyl-sn-glycero-3-phosphoethanolamine + CO2. It functions in the pathway phospholipid metabolism; phosphatidylethanolamine biosynthesis; phosphatidylethanolamine from CDP-diacylglycerol: step 2/2. Its function is as follows. Catalyzes the formation of phosphatidylethanolamine (PtdEtn) from phosphatidylserine (PtdSer). The chain is Phosphatidylserine decarboxylase proenzyme from Halalkalibacterium halodurans (strain ATCC BAA-125 / DSM 18197 / FERM 7344 / JCM 9153 / C-125) (Bacillus halodurans).